Consider the following 404-residue polypeptide: 4-hydroxy-3-methylbut-2-en-1-yl diphosphate synthase (ferredoxin) (404 aa).

Cys313, Cys316, Cys347, and Glu354 together coordinate [4Fe-4S] cluster.

This sequence belongs to the IspG family. [4Fe-4S] cluster serves as cofactor.

It catalyses the reaction (2E)-4-hydroxy-3-methylbut-2-enyl diphosphate + 2 oxidized [2Fe-2S]-[ferredoxin] + H2O = 2-C-methyl-D-erythritol 2,4-cyclic diphosphate + 2 reduced [2Fe-2S]-[ferredoxin] + H(+). Its pathway is isoprenoid biosynthesis; isopentenyl diphosphate biosynthesis via DXP pathway; isopentenyl diphosphate from 1-deoxy-D-xylulose 5-phosphate: step 5/6. Its function is as follows. Converts 2C-methyl-D-erythritol 2,4-cyclodiphosphate (ME-2,4cPP) into 1-hydroxy-2-methyl-2-(E)-butenyl 4-diphosphate. This is 4-hydroxy-3-methylbut-2-en-1-yl diphosphate synthase (ferredoxin) from Crocosphaera subtropica (strain ATCC 51142 / BH68) (Cyanothece sp. (strain ATCC 51142)).